Here is a 210-residue protein sequence, read N- to C-terminus: Na(+)-translocating NADH-quinone reductase subunit D (210 aa).

6 consecutive transmembrane segments (helical) span residues 14–34 (PIVS…ALAV), 42–62 (LVMT…ISML), 72–92 (IIVQ…VLQA), 103–123 (VFVG…AYAM), 131–151 (FMDG…VGFV), and 178–198 (NGLL…IWII).

Belongs to the NqrDE/RnfAE family. In terms of assembly, composed of six subunits; NqrA, NqrB, NqrC, NqrD, NqrE and NqrF.

Its subcellular location is the cell inner membrane. The enzyme catalyses a ubiquinone + n Na(+)(in) + NADH + H(+) = a ubiquinol + n Na(+)(out) + NAD(+). In terms of biological role, NQR complex catalyzes the reduction of ubiquinone-1 to ubiquinol by two successive reactions, coupled with the transport of Na(+) ions from the cytoplasm to the periplasm. NqrA to NqrE are probably involved in the second step, the conversion of ubisemiquinone to ubiquinol. The protein is Na(+)-translocating NADH-quinone reductase subunit D of Shewanella woodyi (strain ATCC 51908 / MS32).